A 71-amino-acid polypeptide reads, in one-letter code: Putative antitoxin VapB15 (71 aa).

Belongs to the UPF0330 family.

Possibly the antitoxin component of a type II toxin-antitoxin (TA) system. Its cognate toxin is VapC15 (Potential). This chain is Putative antitoxin VapB15 (vapB15), found in Archaeoglobus fulgidus (strain ATCC 49558 / DSM 4304 / JCM 9628 / NBRC 100126 / VC-16).